Here is a 153-residue protein sequence, read N- to C-terminus: uncharacterized protein (153 aa).

Disordered stretches follow at residues 24 to 87 (PEDS…DRPL) and 101 to 153 (GDPR…RIPS). The segment covering 27-37 (SSCPCPRLPLS) has biased composition (low complexity). Basic and acidic residues predominate over residues 143 to 153 (TRKESSCRIPS).

This is an uncharacterized protein from Dryophytes versicolor (chameleon treefrog).